A 116-amino-acid chain; its full sequence is Large ribosomal subunit protein bL19 (116 aa).

The protein belongs to the bacterial ribosomal protein bL19 family.

Functionally, this protein is located at the 30S-50S ribosomal subunit interface and may play a role in the structure and function of the aminoacyl-tRNA binding site. The polypeptide is Large ribosomal subunit protein bL19 (Staphylococcus haemolyticus (strain JCSC1435)).